The primary structure comprises 244 residues: Orotidine 5'-phosphate decarboxylase (244 aa).

Residues Asp20, Lys42, 70–79 (DLKFFDIPAT), Thr125, Arg186, Gln195, Gly215, and Arg216 each bind substrate. The active-site Proton donor is the Lys72.

It belongs to the OMP decarboxylase family. Type 1 subfamily. Homodimer.

It carries out the reaction orotidine 5'-phosphate + H(+) = UMP + CO2. The protein operates within pyrimidine metabolism; UMP biosynthesis via de novo pathway; UMP from orotate: step 2/2. Functionally, catalyzes the decarboxylation of orotidine 5'-monophosphate (OMP) to uridine 5'-monophosphate (UMP). In Xylella fastidiosa (strain M12), this protein is Orotidine 5'-phosphate decarboxylase.